The following is a 287-amino-acid chain: Pyridoxal kinase PdxY (287 aa).

Residues serine 10 and 45-46 (TQ) contribute to the substrate site. Residues aspartate 112, alanine 144, glutamate 149, lysine 182, and 209–212 (RPLV) each bind ATP. Aspartate 224 contacts substrate.

Belongs to the pyridoxine kinase family. PdxY subfamily. Homodimer. It depends on Mg(2+) as a cofactor.

The enzyme catalyses pyridoxal + ATP = pyridoxal 5'-phosphate + ADP + H(+). It participates in cofactor metabolism; pyridoxal 5'-phosphate salvage; pyridoxal 5'-phosphate from pyridoxal: step 1/1. In terms of biological role, pyridoxal kinase involved in the salvage pathway of pyridoxal 5'-phosphate (PLP). Catalyzes the phosphorylation of pyridoxal to PLP. This Shigella dysenteriae serotype 1 (strain Sd197) protein is Pyridoxal kinase PdxY.